We begin with the raw amino-acid sequence, 882 residues long: MKTIKPQTPEGNEKHTPMMQQYLRIKAEYPTTLVFYRMGDFYELFFDDAEKASRLLGITLTQRGASNGNPIKMAGVPFHAVDQYLSKLVKLGESIAICEQIGDPATSKGPVERKVLRVITPGTLTDSDLLPEKSEQPLLALYSTTQRKTATIGLAWLSMASGVLKLMEFATDAQNADVRLKHELERIAPAEILLPGSVNDLFSEFSLAKNTTVPDWHFDIAHGTKALYEQLNVGTLTGFGAENLSAAIGAAGALLRYAQSTQGKGLQHVRTLTVETENEFIGLDAATRRNLELTETIRGQDANAATLFSLLDHCRTAMGSRLLRHWLHHARRDQSVAMARHAAINALMRADACSGLASTLASVPDVERITTRIALLSARPRDLAGMRGGLQQLPSLRAYVSMCNKDADAPLLKTIHDALATPSDCLDLVERAIAMEPAAMVRDGGVIARGFDAELDELRGLSENAGQFLIDLETRERARTGINNLRVEYNKVHGFYIEVTHGQTDKVPDDYRRRQTLKNAERYITPELKAFEDKALSAQERALAREKYLYEQVLQQMTQHIATLQNIAHALAQLDTLVALAEHALRHNWCAPQLVSEPTITIEQGRHPVVENHIERFIANDCLLSSECKLLLITGPNMGGKSTYMRQVALITLLAYVGSFVPASSAVIGPIDRIFTRIGAADDLAGGRSTFMVEMTESAAILNGATENSLVLMDEVGRGTSTFDGLALAWAIAKHLIDNTKSFTLFATHYFELTQLPEIHPTAANVHLSAVEHKDSIVFLHAVQAGPASQSYGLQVAQLAGVPQPVIRAARKHLALLEANSMQATPQFDLFAGGGSPTTVESAAEPQQASAVDEAIAAINPDALSPREALDALYRLKELSNQ.

635–642 (GPNMGGKS) is a binding site for ATP.

It belongs to the DNA mismatch repair MutS family.

This protein is involved in the repair of mismatches in DNA. It is possible that it carries out the mismatch recognition step. This protein has a weak ATPase activity. The polypeptide is DNA mismatch repair protein MutS (Janthinobacterium sp. (strain Marseille) (Minibacterium massiliensis)).